A 289-amino-acid polypeptide reads, in one-letter code: Oxaloacetate decarboxylase 1 (289 aa).

Ser50 contacts substrate. Asp88 is a binding site for Mg(2+). Substrate contacts are provided by Arg159 and His235.

This sequence belongs to the isocitrate lyase/PEP mutase superfamily. Oxaloacetate decarboxylase family. In terms of assembly, homotetramer; dimer of dimers. Requires Mg(2+) as cofactor.

It catalyses the reaction oxaloacetate + H(+) = pyruvate + CO2. Functionally, catalyzes the decarboxylation of oxaloacetate into pyruvate. Seems to play a role in maintaining cellular concentrations of bicarbonate and pyruvate. In Pseudomonas putida (strain W619), this protein is Oxaloacetate decarboxylase 1.